The following is a 477-amino-acid chain: Aspartyl/glutamyl-tRNA(Asn/Gln) amidotransferase subunit B (477 aa).

It belongs to the GatB/GatE family. GatB subfamily. Heterotrimer of A, B and C subunits.

It catalyses the reaction L-glutamyl-tRNA(Gln) + L-glutamine + ATP + H2O = L-glutaminyl-tRNA(Gln) + L-glutamate + ADP + phosphate + H(+). The catalysed reaction is L-aspartyl-tRNA(Asn) + L-glutamine + ATP + H2O = L-asparaginyl-tRNA(Asn) + L-glutamate + ADP + phosphate + 2 H(+). In terms of biological role, allows the formation of correctly charged Asn-tRNA(Asn) or Gln-tRNA(Gln) through the transamidation of misacylated Asp-tRNA(Asn) or Glu-tRNA(Gln) in organisms which lack either or both of asparaginyl-tRNA or glutaminyl-tRNA synthetases. The reaction takes place in the presence of glutamine and ATP through an activated phospho-Asp-tRNA(Asn) or phospho-Glu-tRNA(Gln). This is Aspartyl/glutamyl-tRNA(Asn/Gln) amidotransferase subunit B from Ureaplasma parvum serovar 3 (strain ATCC 27815 / 27 / NCTC 11736).